The sequence spans 230 residues: Cyclin-U2-2 (230 aa).

Belongs to the cyclin family. Cyclin U/P subfamily. In terms of assembly, interacts with CDKA-1. In terms of tissue distribution, expressed in roots and stems. Expressed in the shoot apex, leaf primordia and young leaves.

The sequence is that of Cyclin-U2-2 (CYCU2-2) from Arabidopsis thaliana (Mouse-ear cress).